Consider the following 415-residue polypeptide: tRNA(Met) cytidine acetate ligase (415 aa).

ATP is bound by residues 7–20 (VVEY…HRYH), Gly101, Asn162, and 187–188 (RI).

Belongs to the TmcAL family.

The protein localises to the cytoplasm. It carries out the reaction cytidine(34) in elongator tRNA(Met) + acetate + ATP = N(4)-acetylcytidine(34) in elongator tRNA(Met) + AMP + diphosphate. Its function is as follows. Catalyzes the formation of N(4)-acetylcytidine (ac(4)C) at the wobble position of elongator tRNA(Met), using acetate and ATP as substrates. First activates an acetate ion to form acetyladenylate (Ac-AMP) and then transfers the acetyl group to tRNA to form ac(4)C34. This Bacillus velezensis (strain DSM 23117 / BGSC 10A6 / LMG 26770 / FZB42) (Bacillus amyloliquefaciens subsp. plantarum) protein is tRNA(Met) cytidine acetate ligase.